Consider the following 986-residue polypeptide: Vacuolar membrane protease (986 aa).

The Cytoplasmic segment spans residues 1-16; it reads MAPLRLSRANPLAFAR. A helical membrane pass occupies residues 17-37; it reads WPVTLITAVVYLAFLIPLLIV. The Vacuolar portion of the chain corresponds to 38 to 392; the sequence is HHVVPSPPTA…TTFVLFELHT (355 aa). Asn-121 is a glycosylation site (N-linked (GlcNAc...) asparagine). Residues His-176 and Asp-188 each contribute to the Zn(2+) site. Glu-222 functions as the Proton acceptor in the catalytic mechanism. Glu-223, Glu-248, and His-321 together coordinate Zn(2+). The chain crosses the membrane as a helical span at residues 393–413; that stretch reads LFALSVTLLVVAPLALLVTGI. Over 414-444 the chain is Cytoplasmic; sequence ALTRADKMYLFRTSAKADESLDSVPLQGLRG. The helical transmembrane segment at 445–465 threads the bilayer; the sequence is FFRFPFLFAIPTAVTVGLAYL. Residues 466-475 lie on the Vacuolar side of the membrane; the sequence is VTKVNPLIIH. The chain crosses the membrane as a helical span at residues 476–496; sequence SSEYAVWSMMLSAWTFLAWFV. The Cytoplasmic portion of the chain corresponds to 497 to 510; that stretch reads SRMADFARPTALHR. A helical transmembrane segment spans residues 511–531; sequence IYTLTWMFVLAWVLLVISTVY. Over 532-535 the chain is Vacuolar; the sequence is QNQR. The helical transmembrane segment at 536-556 threads the bilayer; the sequence is GLAGSYSVFFFFSGTFLATWI. The Cytoplasmic portion of the chain corresponds to 557–668; that stretch reads SYLELFSLPR…SASLPTWTWT (112 aa). Polar residues predominate over residues 573-585; the sequence is QNRPTSRRASSYG. The tract at residues 573-622 is disordered; it reads QNRPTSRRASSYGGSRLGTASGEDHEEDDHDAEEEEEEQEPTESTSLLGG. The segment covering 596-613 has biased composition (acidic residues); the sequence is DHEEDDHDAEEEEEEQEP. The chain crosses the membrane as a helical span at residues 669 to 689; it reads LQFLLMAPLVLIMVGPLALLL. Over 690-704 the chain is Vacuolar; the sequence is TSALHQTGQDGSSSL. The helical transmembrane segment at 705-725 threads the bilayer; it reads FIYVAIAALTTFLLTPLLPFI. At 726-732 the chain is on the cytoplasmic side; it reads HRHTYHL. Residues 733–753 traverse the membrane as a helical segment; it reads PVFLLLVFLGTLIYNLVAFPF. Residues 754–986 lie on the Vacuolar side of the membrane; it reads SPTNRLKLFF…LVEGWKGFSI (233 aa). N-linked (GlcNAc...) asparagine glycosylation is found at Asn-799, Asn-840, and Asn-948. Residues 840–859 form a disordered region; sequence NTTDDKEGDEDTHHPRKARI.

This sequence belongs to the peptidase M28 family. It depends on Zn(2+) as a cofactor.

The protein localises to the vacuole membrane. May be involved in vacuolar sorting and osmoregulation. This Aspergillus niger (strain ATCC MYA-4892 / CBS 513.88 / FGSC A1513) protein is Vacuolar membrane protease.